We begin with the raw amino-acid sequence, 498 residues long: ATP synthase subunit beta, chloroplastic (498 aa).

Position 172–179 (G172–T179) interacts with ATP.

This sequence belongs to the ATPase alpha/beta chains family. In terms of assembly, F-type ATPases have 2 components, CF(1) - the catalytic core - and CF(0) - the membrane proton channel. CF(1) has five subunits: alpha(3), beta(3), gamma(1), delta(1), epsilon(1). CF(0) has four main subunits: a(1), b(1), b'(1) and c(9-12).

It is found in the plastid. Its subcellular location is the chloroplast thylakoid membrane. The catalysed reaction is ATP + H2O + 4 H(+)(in) = ADP + phosphate + 5 H(+)(out). Produces ATP from ADP in the presence of a proton gradient across the membrane. The catalytic sites are hosted primarily by the beta subunits. The sequence is that of ATP synthase subunit beta, chloroplastic from Lemna minor (Common duckweed).